The chain runs to 443 residues: Tol-Pal system protein TolB (443 aa).

The N-terminal stretch at 1-33 (MKIGIINTKIRTVFSAFACMIAASLVCTMPARA) is a signal peptide.

The protein belongs to the TolB family. The Tol-Pal system is composed of five core proteins: the inner membrane proteins TolA, TolQ and TolR, the periplasmic protein TolB and the outer membrane protein Pal. They form a network linking the inner and outer membranes and the peptidoglycan layer.

It localises to the periplasm. Part of the Tol-Pal system, which plays a role in outer membrane invagination during cell division and is important for maintaining outer membrane integrity. This chain is Tol-Pal system protein TolB, found in Brucella canis (strain ATCC 23365 / NCTC 10854 / RM-666).